We begin with the raw amino-acid sequence, 133 residues long: ATP synthase epsilon chain, chloroplastic (133 aa).

The protein belongs to the ATPase epsilon chain family. In terms of assembly, F-type ATPases have 2 components, CF(1) - the catalytic core - and CF(0) - the membrane proton channel. CF(1) has five subunits: alpha(3), beta(3), gamma(1), delta(1), epsilon(1). CF(0) has three main subunits: a, b and c.

The protein resides in the plastid. It localises to the chloroplast thylakoid membrane. Produces ATP from ADP in the presence of a proton gradient across the membrane. This Phaeodactylum tricornutum (strain CCAP 1055/1) protein is ATP synthase epsilon chain, chloroplastic.